The primary structure comprises 151 residues: UPF0178 protein Tcr_1995 (151 aa).

The interval 116–135 (RSSGVDTGGPPPLNQKDRQA) is disordered.

It belongs to the UPF0178 family.

This chain is UPF0178 protein Tcr_1995, found in Hydrogenovibrio crunogenus (strain DSM 25203 / XCL-2) (Thiomicrospira crunogena).